Consider the following 484-residue polypeptide: Glycogen synthase (484 aa).

Lysine 15 is a binding site for ADP-alpha-D-glucose.

It belongs to the glycosyltransferase 1 family. Bacterial/plant glycogen synthase subfamily.

It catalyses the reaction [(1-&gt;4)-alpha-D-glucosyl](n) + ADP-alpha-D-glucose = [(1-&gt;4)-alpha-D-glucosyl](n+1) + ADP + H(+). It participates in glycan biosynthesis; glycogen biosynthesis. Its function is as follows. Synthesizes alpha-1,4-glucan chains using ADP-glucose. The chain is Glycogen synthase (glgA) from Bacillus subtilis (strain 168).